The chain runs to 98 residues: Integration host factor subunit beta (98 aa).

It belongs to the bacterial histone-like protein family. As to quaternary structure, heterodimer of an alpha and a beta chain.

This protein is one of the two subunits of integration host factor, a specific DNA-binding protein that functions in genetic recombination as well as in transcriptional and translational control. The protein is Integration host factor subunit beta of Teredinibacter turnerae (strain ATCC 39867 / T7901).